Reading from the N-terminus, the 45-residue chain is Large ribosomal subunit protein bL34 (45 aa).

It belongs to the bacterial ribosomal protein bL34 family.

The sequence is that of Large ribosomal subunit protein bL34 (rpmH) from Streptomyces coelicolor (strain ATCC BAA-471 / A3(2) / M145).